Reading from the N-terminus, the 202-residue chain is Small ribosomal subunit protein uS4c (202 aa).

The interval Leu18–Tyr45 is disordered. An S4 RNA-binding domain is found at Met90–Tyr152.

This sequence belongs to the universal ribosomal protein uS4 family. As to quaternary structure, part of the 30S ribosomal subunit. Contacts protein S5. The interaction surface between S4 and S5 is involved in control of translational fidelity.

It localises to the plastid. Its subcellular location is the chloroplast. One of the primary rRNA binding proteins, it binds directly to 16S rRNA where it nucleates assembly of the body of the 30S subunit. In terms of biological role, with S5 and S12 plays an important role in translational accuracy. The sequence is that of Small ribosomal subunit protein uS4c (rps4) from Nephroselmis olivacea (Green alga).